We begin with the raw amino-acid sequence, 191 residues long: Shikimate kinase (191 aa).

24–29 (GSGKTS) is an ATP binding site. Mg(2+) is bound at residue threonine 28. Substrate is bound by residues aspartate 46, arginine 70, and glycine 92. Residue arginine 130 participates in ATP binding. Arginine 149 contributes to the substrate binding site.

This sequence belongs to the shikimate kinase family. Monomer. It depends on Mg(2+) as a cofactor.

Its subcellular location is the cytoplasm. It carries out the reaction shikimate + ATP = 3-phosphoshikimate + ADP + H(+). The protein operates within metabolic intermediate biosynthesis; chorismate biosynthesis; chorismate from D-erythrose 4-phosphate and phosphoenolpyruvate: step 5/7. Its function is as follows. Catalyzes the specific phosphorylation of the 3-hydroxyl group of shikimic acid using ATP as a cosubstrate. This chain is Shikimate kinase, found in Synechococcus sp. (strain CC9902).